The sequence spans 85 residues: SPbeta prophage-derived uncharacterized protein YoqG (85 aa).

This is SPbeta prophage-derived uncharacterized protein YoqG (yoqG) from Bacillus subtilis (strain 168).